A 526-amino-acid polypeptide reads, in one-letter code: GMP synthase [glutamine-hydrolyzing] (526 aa).

The 200-residue stretch at 9 to 208 folds into the Glutamine amidotransferase type-1 domain; the sequence is RILILDFGSQ…LVNICGCKQL (200 aa). Residue cysteine 86 is the Nucleophile of the active site. Residues histidine 182 and glutamate 184 contribute to the active site. Residues 209–401 enclose the GMPS ATP-PPase domain; sequence WTPGRIIEDA…LGLPYDMVYR (193 aa). Position 236–242 (236–242) interacts with ATP; that stretch reads SGGVDSS.

As to quaternary structure, homodimer.

It catalyses the reaction XMP + L-glutamine + ATP + H2O = GMP + L-glutamate + AMP + diphosphate + 2 H(+). It functions in the pathway purine metabolism; GMP biosynthesis; GMP from XMP (L-Gln route): step 1/1. Catalyzes the synthesis of GMP from XMP. The polypeptide is GMP synthase [glutamine-hydrolyzing] (Hahella chejuensis (strain KCTC 2396)).